Here is a 78-residue protein sequence, read N- to C-terminus: DNA-directed RNA polymerase subunit Rpo5 (78 aa).

The protein belongs to the archaeal Rpo5/eukaryotic RPB5 RNA polymerase subunit family. As to quaternary structure, part of the RNA polymerase complex.

Its subcellular location is the cytoplasm. It carries out the reaction RNA(n) + a ribonucleoside 5'-triphosphate = RNA(n+1) + diphosphate. Its function is as follows. DNA-dependent RNA polymerase (RNAP) catalyzes the transcription of DNA into RNA using the four ribonucleoside triphosphates as substrates. This is DNA-directed RNA polymerase subunit Rpo5 from Methanococcus maripaludis (strain C6 / ATCC BAA-1332).